The sequence spans 215 residues: MARVFPQAAISSPYMSTERETFTVWMKSLVYQTNGLTVYNSNGEITYRVENYDKCSNEVHIMDLHGNILFTIRKKKLWLFGSWYVYRECGSFTSTEEVKPCARIKRSSIRDGDWEVRDETNEVFWILRFDPKFAFQIIDIHGNIIAQVKPKQSSNGITLGEDVLTLEVKPRVDHSLVVTLVTVYGLIKGIDGEVKQLRDFEEEEVAVGDEIAIEI.

It belongs to the LOR family.

Its function is as follows. Might be related to the phospholipid scramblase and tubby-like superfamily of membrane tethered transcription factors. In Arabidopsis thaliana (Mouse-ear cress), this protein is Protein LURP-one-related 4.